The primary structure comprises 209 residues: Orotate phosphoribosyltransferase (209 aa).

Residues arginine 96, lysine 100, histidine 102, and 122-130 each bind 5-phospho-alpha-D-ribose 1-diphosphate; that span reads EDLISTGGS. Serine 126 lines the orotate pocket.

It belongs to the purine/pyrimidine phosphoribosyltransferase family. PyrE subfamily. In terms of assembly, homodimer. Requires Mg(2+) as cofactor.

It catalyses the reaction orotidine 5'-phosphate + diphosphate = orotate + 5-phospho-alpha-D-ribose 1-diphosphate. Its pathway is pyrimidine metabolism; UMP biosynthesis via de novo pathway; UMP from orotate: step 1/2. In terms of biological role, catalyzes the transfer of a ribosyl phosphate group from 5-phosphoribose 1-diphosphate to orotate, leading to the formation of orotidine monophosphate (OMP). The protein is Orotate phosphoribosyltransferase of Streptococcus agalactiae serotype III (strain NEM316).